We begin with the raw amino-acid sequence, 214 residues long: Phosphatidylserine decarboxylase proenzyme (214 aa).

Catalysis depends on S182, which acts as the Schiff-base intermediate with substrate; via pyruvic acid. S182 is subject to Pyruvic acid (Ser); by autocatalysis.

This sequence belongs to the phosphatidylserine decarboxylase family. PSD-A subfamily. As to quaternary structure, heterodimer of a large membrane-associated beta subunit and a small pyruvoyl-containing alpha subunit. Pyruvate is required as a cofactor. Is synthesized initially as an inactive proenzyme. Formation of the active enzyme involves a self-maturation process in which the active site pyruvoyl group is generated from an internal serine residue via an autocatalytic post-translational modification. Two non-identical subunits are generated from the proenzyme in this reaction, and the pyruvate is formed at the N-terminus of the alpha chain, which is derived from the carboxyl end of the proenzyme. The post-translation cleavage follows an unusual pathway, termed non-hydrolytic serinolysis, in which the side chain hydroxyl group of the serine supplies its oxygen atom to form the C-terminus of the beta chain, while the remainder of the serine residue undergoes an oxidative deamination to produce ammonia and the pyruvoyl prosthetic group on the alpha chain.

Its subcellular location is the cell membrane. It catalyses the reaction a 1,2-diacyl-sn-glycero-3-phospho-L-serine + H(+) = a 1,2-diacyl-sn-glycero-3-phosphoethanolamine + CO2. The protein operates within phospholipid metabolism; phosphatidylethanolamine biosynthesis; phosphatidylethanolamine from CDP-diacylglycerol: step 2/2. In terms of biological role, catalyzes the formation of phosphatidylethanolamine (PtdEtn) from phosphatidylserine (PtdSer). The chain is Phosphatidylserine decarboxylase proenzyme from Burkholderia cenocepacia (strain ATCC BAA-245 / DSM 16553 / LMG 16656 / NCTC 13227 / J2315 / CF5610) (Burkholderia cepacia (strain J2315)).